Reading from the N-terminus, the 207-residue chain is Ciliary microtubule-associated protein 3 (207 aa).

In terms of assembly, interacts with proteins involved in ciliary transport, including ARL13B, CETN1, KIF3A, RAB6A, RAB8A, TUBB1 and TUBG1. Interacts with AURKA. Expressed in tissues rich in ciliated cells, such as lung, kidney, vas deferens and testis. Both isoforms 1 and 2 are expressed in testis.

The protein localises to the golgi apparatus. It localises to the golgi stack. The protein resides in the trans-Golgi network. Its subcellular location is the nucleus. It is found in the cytoplasm. The protein localises to the cytoplasmic vesicle. Functionally, during primary cilia disassembly, involved in cilia disassembly. Required specifically to control cilia retraction as well as the liberation and duplication of the basal body/centrosome. May act by stimulating AURKA activity at the basal body in a cell cycle-dependent manner. This is Ciliary microtubule-associated protein 3 (Cimap3) from Mus musculus (Mouse).